Here is a 633-residue protein sequence, read N- to C-terminus: tRNA uridine 5-carboxymethylaminomethyl modification enzyme MnmG (633 aa).

Residues 15 to 20, Val-127, and Ser-182 each bind FAD; that span reads GAGHAG. 276–290 serves as a coordination point for NAD(+); it reads GPRYCPSIEDKIVRF. Gln-373 lines the FAD pocket.

Belongs to the MnmG family. Homodimer. Heterotetramer of two MnmE and two MnmG subunits. It depends on FAD as a cofactor.

The protein localises to the cytoplasm. In terms of biological role, NAD-binding protein involved in the addition of a carboxymethylaminomethyl (cmnm) group at the wobble position (U34) of certain tRNAs, forming tRNA-cmnm(5)s(2)U34. The protein is tRNA uridine 5-carboxymethylaminomethyl modification enzyme MnmG of Streptococcus thermophilus (strain CNRZ 1066).